The sequence spans 116 residues: Ribonuclease P protein component (116 aa).

It belongs to the RnpA family. In terms of assembly, consists of a catalytic RNA component (M1 or rnpB) and a protein subunit.

The catalysed reaction is Endonucleolytic cleavage of RNA, removing 5'-extranucleotides from tRNA precursor.. Its function is as follows. RNaseP catalyzes the removal of the 5'-leader sequence from pre-tRNA to produce the mature 5'-terminus. It can also cleave other RNA substrates such as 4.5S RNA. The protein component plays an auxiliary but essential role in vivo by binding to the 5'-leader sequence and broadening the substrate specificity of the ribozyme. In Exiguobacterium sibiricum (strain DSM 17290 / CCUG 55495 / CIP 109462 / JCM 13490 / 255-15), this protein is Ribonuclease P protein component.